The primary structure comprises 111 residues: Cytochrome c-550 (111 aa).

Cysteine 13, cysteine 16, histidine 17, and methionine 90 together coordinate heme c.

Post-translationally, binds 1 heme c group covalently per subunit.

In Novispirillum itersonii (Aquaspirillum itersonii), this protein is Cytochrome c-550.